An 86-amino-acid polypeptide reads, in one-letter code: Omega-theraphotoxin-Hhn1e (86 aa).

The N-terminal stretch at 1-21 (MKSIVFVALFGLALLAVVCSA) is a signal peptide. Residues 22-50 (SEGAHKELLKEVVRAMVVDKTDAVQAEER) constitute a propeptide that is removed on maturation. Cystine bridges form between C52-C66 and C65-C78.

It belongs to the neurotoxin 10 (Hwtx-1) family. 17 (Hntx-9) subfamily. Expressed by the venom gland.

Its subcellular location is the secreted. Functionally, ion channel inhibitor. The sequence is that of Omega-theraphotoxin-Hhn1e from Cyriopagopus hainanus (Chinese bird spider).